The primary structure comprises 2541 residues: Talin-1 (2541 aa).

An FERM domain is found at 86-403 (RPLKIRMLDG…GYIDIILKKK (318 aa)). Phosphothreonine is present on Thr-167. The interval 280 to 435 (FQAHKNCGQM…PKKSTVLQQQ (156 aa)) is interaction with LAYN. A phosphoserine mark is found at Ser-405, Ser-425, Ser-446, Ser-620, and Ser-729. The helical bundle R1 stretch occupies residues 482-655 (RGHMPPLTSA…QASGELLQQI (174 aa)). A helical bundle R2 region spans residues 656-786 (GESDTDPHFQ…ALNELLQHVK (131 aa)). Positions 787 to 911 (AHATGAGPAG…NAAAQNAIKK (125 aa)) are helical bundle R3. Residues 913–1044 (LVQRLEHAAK…RTAAQKAQEA (132 aa)) are helical bundle R4. Ser-1021 is modified (phosphoserine). The interval 1046-1206 (GPLEMDSALS…NRCVSCLPGQ (161 aa)) is helical bundle R5. The residue at position 1116 (Tyr-1116) is a Phosphotyrosine. Thr-1142 is subject to Phosphothreonine. Ser-1201 and Ser-1225 each carry phosphoserine. Residues 1207-1357 (RDVDNALRAV…QLITMCTQQA (151 aa)) form a helical bundle R6 region. The residue at position 1263 (Thr-1263) is a Phosphothreonine. Position 1323 is a phosphoserine (Ser-1323). The segment at 1327 to 1948 (AAPNLKSQLA…CSPSDAYTKK (622 aa)) is interaction with SYNM. Residues 1358 to 1453 (PGQKECDNAL…AYLVGVSDPN (96 aa)) are helical bundle R7A. Positions 1359–1659 (GQKECDNALR…SMRDKAPGQL (301 aa)) are interaction with VCL and F-actin. A helical bundle R8 region spans residues 1461–1580 (LVEPTQFARA…NLSAFASNPE (120 aa)). N6-acetyllysine is present on Lys-1544. A helical bundle R7B region spans residues 1581–1653 (FSSIPAQISP…IKKLITSMRD (73 aa)). Residues 1655 to 1822 (APGQLECETA…TLNEAASAAG (168 aa)) form a helical bundle R9 region. Positions 1823-1973 (VVGGMVDSIT…VLAALQAGNR (151 aa)) are helical bundle R10. Ser-1849 bears the Phosphoserine mark. Thr-1855 bears the Phosphothreonine mark. Residue Ser-1878 is modified to Phosphoserine. Residues 1974-2140 (GTQACITAAS…TVKAVEDEAT (167 aa)) are helical bundle R11. The residue at position 2031 (Lys-2031) is an N6-acetyllysine. Phosphoserine is present on Ser-2040. The residue at position 2115 (Lys-2115) is an N6-acetyllysine. The segment at 2141-2294 (KGTRALEATT…QAAEAMKGTE (154 aa)) is helical bundle R12. Positions 2293–2533 (TEWVDPEDPT…QIRQQQYKFL (241 aa)) constitute an I/LWEQ domain. The tract at residues 2300 to 2482 (DPTVIAENEL…AAQKAAAFEE (183 aa)) is helical bundle R13.

As to quaternary structure, part of a complex composed of THSD1, PTK2/FAK1, TLN1 and VCL. Interacts with THSD1; this promotes interaction with PTK2/FAK1 and VCL. Binds with high affinity to VCL and with low affinity to integrins. Interacts with APBB1IP; this inhibits VCL binding. Interacts with PTK2/FAK1. Interacts with PIP5K1C and NRAP. Interacts with LAYN. Interacts with SYNM. Interacts with ITGB1; the interaction is prevented by competitive binding of ITGB1BP1. Interacts with SVEP1. Interacts (via R7 domain) with KANK1 or KANK2 (via KN motif); this interaction likely initiates the assembly of cortical microtubule stabilization complexes (CMSCs) at the vicinity of focal adhesions. Interacts with VCL; shows reduced VCL binding compared to isoform 2. Interacts with APBB1IP; shows similar level of binding compared to isoform 2. In terms of assembly, interacts with VCL; shows enhanced VCL binding compared to isoform 1. Interacts with APBB1IP; shows similar level of binding compared to isoform 1. As to quaternary structure, (Microbial infection) Interacts with human cytomegalovirus protein UL135. In terms of tissue distribution, expressed at low to non-detectable levels in many tissues but highly expressed in skin and pancreas with other tissues including kidney cortex, endocervix, testis, pituitary, liver, and spleen also showing robust expression.

Its subcellular location is the cell projection. It localises to the ruffle membrane. The protein resides in the cytoplasm. It is found in the cytoskeleton. The protein localises to the cell surface. Its subcellular location is the cell junction. It localises to the focal adhesion. Its function is as follows. High molecular weight cytoskeletal protein concentrated at regions of cell-matrix and cell-cell contacts. Involved in connections of major cytoskeletal structures to the plasma membrane. With KANK1 co-organize the assembly of cortical microtubule stabilizing complexes (CMSCs) positioned to control microtubule-actin crosstalk at focal adhesions (FAs) rims. This Homo sapiens (Human) protein is Talin-1 (TLN1).